A 319-amino-acid chain; its full sequence is D-ribose/D-allose-binding protein (319 aa).

A signal peptide spans 1 to 29 (MKRVASRRLLAAVVLTACSSFLPLSAVHA).

It belongs to the bacterial solute-binding protein 2 family.

It is found in the periplasm. In terms of biological role, binds specifically both D-ribose and D-allose, with affinities in the lower micromolar range. This is D-ribose/D-allose-binding protein from Pseudomonas aeruginosa (strain ATCC 15692 / DSM 22644 / CIP 104116 / JCM 14847 / LMG 12228 / 1C / PRS 101 / PAO1).